The sequence spans 377 residues: Succinyl-diaminopimelate desuccinylase (377 aa).

Histidine 66 lines the Zn(2+) pocket. Residue aspartate 68 is part of the active site. Residue aspartate 99 participates in Zn(2+) binding. Glutamate 133 functions as the Proton acceptor in the catalytic mechanism. Positions 134, 163, and 349 each coordinate Zn(2+).

It belongs to the peptidase M20A family. DapE subfamily. As to quaternary structure, homodimer. Zn(2+) serves as cofactor. The cofactor is Co(2+).

It carries out the reaction N-succinyl-(2S,6S)-2,6-diaminopimelate + H2O = (2S,6S)-2,6-diaminopimelate + succinate. The protein operates within amino-acid biosynthesis; L-lysine biosynthesis via DAP pathway; LL-2,6-diaminopimelate from (S)-tetrahydrodipicolinate (succinylase route): step 3/3. In terms of biological role, catalyzes the hydrolysis of N-succinyl-L,L-diaminopimelic acid (SDAP), forming succinate and LL-2,6-diaminopimelate (DAP), an intermediate involved in the bacterial biosynthesis of lysine and meso-diaminopimelic acid, an essential component of bacterial cell walls. The polypeptide is Succinyl-diaminopimelate desuccinylase (Legionella pneumophila (strain Paris)).